Consider the following 349-residue polypeptide: TEGPYFYIPMSNATGIVRSPYEYPQYYLVYPAAYAVLGAYMFFLIIFGFPVNFLTLYVTIEHKKLRTPLNYILLNLAVADLFMVIGGFTTTIYTSMHGYFVLGRLGCNLEGFSATLGGMIGLWSLVVLAIERWVVVCKPMSNFRFGENHAIMGVTLTWVMGLACTVPPLVGWSRYIPEGMQCSCGIDYYTRAEGFNNDSYVLYMFVCHFLIPLVVIFFCYGRLLCAVKEAAAAQQESETTQRAEREVTRMVILMVIGFLVCWLPYASVAWYIFTHQGSEFGPLFMTIPAFFAKSSSIYNPVIYICMNKQFRQCMLTTLFCGKNPFEEEEGASSTKTEASSASSSSVSPA.

The Extracellular segment spans residues 1 to 33 (TEGPYFYIPMSNATGIVRSPYEYPQYYLVYPAA). Residue Asn-12 is glycosylated (N-linked (GlcNAc...) asparagine). Residues 34 to 58 (YAVLGAYMFFLIIFGFPVNFLTLYV) form a helical membrane-spanning segment. Residues 59-70 (TIEHKKLRTPLN) are Cytoplasmic-facing. Residues 71–93 (YILLNLAVADLFMVIGGFTTTIY) form a helical membrane-spanning segment. At 94–107 (TSMHGYFVLGRLGC) the chain is on the extracellular side. The cysteines at positions 107 and 184 are disulfide-linked. The helical transmembrane segment at 108 to 130 (NLEGFSATLGGMIGLWSLVVLAI) threads the bilayer. A 'Ionic lock' involved in activated form stabilization motif is present at residues 131 to 133 (ERW). Topologically, residues 131–149 (ERWVVVCKPMSNFRFGENH) are cytoplasmic. Residues 150-170 (AIMGVTLTWVMGLACTVPPLV) traverse the membrane as a helical segment. Over 171–199 (GWSRYIPEGMQCSCGIDYYTRAEGFNNDS) the chain is Extracellular. An N-linked (GlcNAc...) asparagine glycan is attached at Asn-197. The chain crosses the membrane as a helical span at residues 200 to 221 (YVLYMFVCHFLIPLVVIFFCYG). Residues 222 to 249 (RLLCAVKEAAAAQQESETTQRAEREVTR) lie on the Cytoplasmic side of the membrane. Residues 250–271 (MVILMVIGFLVCWLPYASVAWY) traverse the membrane as a helical segment. Topologically, residues 272–283 (IFTHQGSEFGPL) are extracellular. Residues 284-305 (FMTIPAFFAKSSSIYNPVIYIC) form a helical membrane-spanning segment. An N6-(retinylidene)lysine modification is found at Lys-293. Over 306–349 (MNKQFRQCMLTTLFCGKNPFEEEEGASSTKTEASSASSSSVSPA) the chain is Cytoplasmic. Residue Cys-320 is the site of S-palmitoyl cysteine attachment. A disordered region spans residues 326–349 (EEEEGASSTKTEASSASSSSVSPA). Over residues 331 to 349 (ASSTKTEASSASSSSVSPA) the composition is skewed to low complexity.

This sequence belongs to the G-protein coupled receptor 1 family. Opsin subfamily. Phosphorylated on some or all of the serine and threonine residues present in the C-terminal region. Post-translationally, contains one covalently linked retinal chromophore.

It is found in the membrane. Its subcellular location is the cell projection. The protein localises to the cilium. The protein resides in the photoreceptor outer segment. Photoreceptor required for image-forming vision at low light intensity. While most salt water fish species use retinal as chromophore, most freshwater fish use 3-dehydroretinal, or a mixture of retinal and 3-dehydroretinal. Light-induced isomerization of 11-cis to all-trans retinal triggers a conformational change that activates signaling via G-proteins. Subsequent receptor phosphorylation mediates displacement of the bound G-protein alpha subunit by arrestin and terminates signaling. In Myripristis violacea (Lattice soldierfish), this protein is Rhodopsin (rho).